Consider the following 276-residue polypeptide: Undecaprenyl-diphosphatase 1 (276 aa).

A run of 8 helical transmembrane segments spans residues 1–21, 44–64, 87–107, 114–134, 150–170, 190–210, 222–242, and 251–271; these read MSLW…LFPV, QLLP…LWYF, GHLM…GLLL, VFHD…LLWL, LTFK…IPGF, AAEF…LLEL, DALL…RFLM, and LASF…WFMF.

This sequence belongs to the UppP family.

It localises to the cell inner membrane. The catalysed reaction is di-trans,octa-cis-undecaprenyl diphosphate + H2O = di-trans,octa-cis-undecaprenyl phosphate + phosphate + H(+). In terms of biological role, catalyzes the dephosphorylation of undecaprenyl diphosphate (UPP). Confers resistance to bacitracin. In Burkholderia pseudomallei (strain 1106a), this protein is Undecaprenyl-diphosphatase 1.